The primary structure comprises 1252 residues: DNA-directed RNA polymerase subunit beta (1252 aa).

It belongs to the RNA polymerase beta chain family. The RNAP catalytic core consists of 2 alpha, 1 beta, 1 beta' and 1 omega subunit. When a sigma factor is associated with the core the holoenzyme is formed, which can initiate transcription.

It carries out the reaction RNA(n) + a ribonucleoside 5'-triphosphate = RNA(n+1) + diphosphate. DNA-dependent RNA polymerase catalyzes the transcription of DNA into RNA using the four ribonucleoside triphosphates as substrates. The chain is DNA-directed RNA polymerase subunit beta from Chlamydia pneumoniae (Chlamydophila pneumoniae).